Consider the following 317-residue polypeptide: Acetyl-coenzyme A carboxylase carboxyl transferase subunit alpha (317 aa).

Positions 37-291 (KLQEKVDKLL…GNAIEDALDD (255 aa)) constitute a CoA carboxyltransferase C-terminal domain.

The protein belongs to the AccA family. In terms of assembly, acetyl-CoA carboxylase is a heterohexamer composed of biotin carboxyl carrier protein (AccB), biotin carboxylase (AccC) and two subunits each of ACCase subunit alpha (AccA) and ACCase subunit beta (AccD).

The protein localises to the cytoplasm. It carries out the reaction N(6)-carboxybiotinyl-L-lysyl-[protein] + acetyl-CoA = N(6)-biotinyl-L-lysyl-[protein] + malonyl-CoA. The protein operates within lipid metabolism; malonyl-CoA biosynthesis; malonyl-CoA from acetyl-CoA: step 1/1. In terms of biological role, component of the acetyl coenzyme A carboxylase (ACC) complex. First, biotin carboxylase catalyzes the carboxylation of biotin on its carrier protein (BCCP) and then the CO(2) group is transferred by the carboxyltransferase to acetyl-CoA to form malonyl-CoA. The polypeptide is Acetyl-coenzyme A carboxylase carboxyl transferase subunit alpha (Rhodospirillum centenum (strain ATCC 51521 / SW)).